Reading from the N-terminus, the 92-residue chain is Non-specific lipid-transfer protein 2 (92 aa).

4 cysteine pairs are disulfide-bonded: cysteine 4–cysteine 52, cysteine 14–cysteine 28, cysteine 29–cysteine 74, and cysteine 50–cysteine 88.

The protein belongs to the plant LTP family. As to expression, expressed in seeds and, at very low levels, in pulp of fruit (at protein level).

Its function is as follows. Plant non-specific lipid-transfer proteins transfer phospholipids as well as galactolipids across membranes. May play a role in wax or cutin deposition in the cell walls of expanding epidermal cells and certain secretory tissues. This Actinidia deliciosa (Kiwi) protein is Non-specific lipid-transfer protein 2.